A 362-amino-acid chain; its full sequence is Transcription factor Sox-18 (362 aa).

A compositionally biased stretch (basic and acidic residues) spans 1–13 (MHRPEPSYCREEP). The segment at 1 to 68 (MHRPEPSYCR…CEEKPGDPRI (68 aa)) is disordered. Pro residues predominate over residues 37 to 51 (PSSPPAPDSPTPSPQ). The span at 59 to 68 (CEEKPGDPRI) shows a compositional bias: basic and acidic residues. The segment at residues 68–136 (IRRPMNAFMV…QHLQDHPNYK (69 aa)) is a DNA-binding region (HMG box). Interaction with DNA stretches follow at residues 70–83 (RPMN…KDER) and 94–106 (HNAV…GQSW). Residues 129 to 159 (LQDHPNYKYRPRRKKQAKKLKRVDPSPLLRN) are disordered. Positions 135 to 149 (YKYRPRRKKQAKKLK) are enriched in basic residues. An important for transcriptional activation region spans residues 149-209 (KRVDPSPLLR…VVEPSEPAFF (61 aa)). Positions 235–361 (KTLREISLPY…TAMYYTPCIT (127 aa)) constitute a Sox C-terminal domain. A 9aaTAD motif is present at residues 307–315 (NEFDQYLNM).

It is found in the nucleus. Transcription factor. Binds to the consensus DNA sequence 5'-AACAAT-3'. Also binds 5'-CACAAT-3' and 5'-AATAAT-3' but with a lower affinity. Acts partially redundantly with sox7 during cardiogenesis, acting indirectly through nodal-signaling to induce mesodermal, organizer and endodermal tissues, which then interact to initiate cardiogenesis. Also acts as an antagonist of beta-catenin signaling. This Xenopus tropicalis (Western clawed frog) protein is Transcription factor Sox-18.